The following is a 342-amino-acid chain: Cytochrome c oxidase subunit 2 (342 aa).

An N-terminal signal peptide occupies residues 1 to 22 (MKLWKTASRFLPLSFLTLFLTG). Cys23 is lipidated: N-palmitoyl cysteine. Cys23 carries the S-diacylglycerol cysteine lipid modification. Topologically, residues 23–50 (CLGEENLTALDPKGPQAQWIYDNMILSI) are extracellular. Residues 23–249 (CLGEENLTAL…MSAEVEEPTE (227 aa)) form a cytochrome c oxidase subunit II region. Residues 51–69 (IVMALVSIVVFAIFFIILA) form a helical membrane-spanning segment. At 70 to 89 (KYRRKPGDDEIPKQVHGNTA) the chain is on the cytoplasmic side. The helical transmembrane segment at 90-108 (LEITWTVIPIILLVILAVP) threads the bilayer. Topologically, residues 109–342 (TITGTFMFAD…AYLRSLKVME (234 aa)) are extracellular. Cu cation is bound by residues His175, Cys210, Cys214, and His218. The 93-residue stretch at 250-342 (TLANQGRQVF…AYLRSLKVME (93 aa)) folds into the Cytochrome c domain. Residues Cys264, Cys267, His268, and Met317 each contribute to the heme c site.

The protein belongs to the cytochrome c oxidase subunit 2 family. Cu cation is required as a cofactor. The cofactor is heme c.

Its subcellular location is the cell membrane. The enzyme catalyses 4 Fe(II)-[cytochrome c] + O2 + 8 H(+)(in) = 4 Fe(III)-[cytochrome c] + 2 H2O + 4 H(+)(out). In terms of biological role, subunits I and II form the functional core of the enzyme complex. Electrons originating in cytochrome c are transferred via heme a and Cu(A) to the binuclear center formed by heme a3 and Cu(B). The sequence is that of Cytochrome c oxidase subunit 2 (ctaC) from Alkalihalophilus pseudofirmus (strain ATCC BAA-2126 / JCM 17055 / OF4) (Bacillus pseudofirmus).